Here is a 359-residue protein sequence, read N- to C-terminus: Proton-gated ion channel (359 aa).

The signal sequence occupies residues 1-43 (MFPTGWRPKLSESIAASRMLWQPMAAVAVVQIGLLWFSPPVWG). The Periplasmic portion of the chain corresponds to 44–235 (QDMVSPPPPI…LDYQLRISRQ (192 aa)). A helical transmembrane segment spans residues 236 to 258 (YFSYIPNIILPMLFILFISWTAF). Residues 259–261 (WST) are Cytoplasmic-facing. A helical transmembrane segment spans residues 262–286 (SYEANVTLVVSTLIAHIAFNILVET). At 287 to 294 (NLPKTPYM) the chain is on the periplasmic side. A helical transmembrane segment spans residues 295–323 (TYTGAIIFMIYLFYFVAVIEVTVQHYLKV). The Cytoplasmic segment spans residues 324–326 (ESQ). A helical membrane pass occupies residues 327–359 (PARAASITRASRIAFPVVFLLANIILAFLFFGF).

Belongs to the ligand-gated ion channel (TC 1.A.9) family. As to quaternary structure, homopentamer.

The protein resides in the cell inner membrane. Tetraethylammonium (TEA) and tetrabutylammonium (TBA) inhibit the proton-activated currents in a dose- and voltage-dependent manner in vitro, whereas the blocker of acid sensing ion channels, amiloride, has no effect. Channel current of GLIC can be inhibited by inhaled and intravenous general anesthetics at and below concentrations used clinically. Ion conduction is also inhibited by lidocaine and by divalent transition metal ions such as cadmium ions. Its function is as follows. Cationic channel with similar permeabilities for Na(+) and K(+), that is activated by an increase of the proton concentration on the extracellular side. Displays no permeability for chloride ions. Shows slow kinetics of activation, no desensitization and a single channel conductance of 8 pS. Might contribute to adaptation to external pH change. This Gloeobacter violaceus (strain ATCC 29082 / PCC 7421) protein is Proton-gated ion channel (glvI).